The chain runs to 171 residues: Myosin regulatory light polypeptide 9 (171 aa).

A compositionally biased stretch (basic residues) spans 1 to 15 (MSSKRAKAKTTKKRP). The interval 1–21 (MSSKRAKAKTTKKRPQSATSN) is disordered. At serine 2 the chain carries N-acetylserine. Threonine 19 is modified (phosphothreonine; by MLCK, CIT and ROCK2). Serine 20 carries the phosphoserine; by CDC42BP, CIT, MLCK, PAK1, ROCK1, ROCK2, DAPK1, DAPK2 and ZIPK/DAPK3 modification. 2 EF-hand domains span residues 29–64 (SQIQEFKEAFNMIDQNRDGFIDKEDLHDMLASLGKN) and 98–133 (DPEDVIRNAFACFDEEASGFIHEDHLRELLTTMGDR). 4 residues coordinate Ca(2+): aspartate 42, asparagine 44, aspartate 46, and aspartate 53.

As to quaternary structure, myosin is a hexamer of 2 heavy chains and 4 light chains: interacts with myosin heavy chain MYO19. Interacts with LUZP1; the interaction results in inhibition of phosphorylation of MYL9 by DAPK3. In terms of processing, phosphorylation increases the actin-activated myosin ATPase activity and thereby regulates the contractile activity. It is required to generate the driving force in the migration of the cells but not necessary for localization of myosin-2 at the leading edge. Phosphorylation is required for myotube formation. Phosphorylated by DAPK3; DAPK3-mediated phosphorylation is inhibited by LUZP1. In terms of tissue distribution, smooth muscle tissues and in some, but not all, nonmuscle cells.

It localises to the cytoplasm. The protein localises to the cytoskeleton. It is found in the cell cortex. Myosin regulatory subunit that plays an important role in regulation of both smooth muscle and nonmuscle cell contractile activity via its phosphorylation. Implicated in cytokinesis, receptor capping, and cell locomotion. In myoblasts, may regulate PIEZO1-dependent cortical actomyosin assembly involved in myotube formation. The polypeptide is Myosin regulatory light polypeptide 9 (Myl9) (Rattus norvegicus (Rat)).